The primary structure comprises 252 residues: MLAKRVIPCLDVKEGRVVKGVNFIGLQDVGDPVEIAALYNDAGADEIVFLDITATHEGRKTIVDVVEKTASKVFIPLTVGGGISNVKDMYNLLRAGADKVSINSAAVRNPKLIGEGAEHFGSQCIVVAIDARKVAEDKWNVYVNGGRVDTGMDAIRWAKRVTELGAGEILLTSMDADGTKNGYDLRLTEEISKSVSVPVIASGGCGHADHIIEVFQKTAVDAALAASIFHYGEATIGDVKRKLRNANVEVRL.

Residues Asp-11 and Asp-130 contribute to the active site.

It belongs to the HisA/HisF family. Heterodimer of HisH and HisF.

The protein resides in the cytoplasm. It catalyses the reaction 5-[(5-phospho-1-deoxy-D-ribulos-1-ylimino)methylamino]-1-(5-phospho-beta-D-ribosyl)imidazole-4-carboxamide + L-glutamine = D-erythro-1-(imidazol-4-yl)glycerol 3-phosphate + 5-amino-1-(5-phospho-beta-D-ribosyl)imidazole-4-carboxamide + L-glutamate + H(+). It functions in the pathway amino-acid biosynthesis; L-histidine biosynthesis; L-histidine from 5-phospho-alpha-D-ribose 1-diphosphate: step 5/9. Its function is as follows. IGPS catalyzes the conversion of PRFAR and glutamine to IGP, AICAR and glutamate. The HisF subunit catalyzes the cyclization activity that produces IGP and AICAR from PRFAR using the ammonia provided by the HisH subunit. In Bacillus cereus (strain ATCC 10987 / NRS 248), this protein is Imidazole glycerol phosphate synthase subunit HisF.